The following is a 303-amino-acid chain: RELT-like protein 2 (303 aa).

Residues 15–35 (LYMLFLLVLVFFLMGLVGFMI) form a helical membrane-spanning segment. Disordered regions lie at residues 46–67 (CRTS…DDDM) and 132–303 (CLHC…AGSM). S52 is modified (phosphoserine). Basic and acidic residues-rich tracts occupy residues 148–158 (RSKEGKSRPRT) and 172–188 (THIE…DGSP). Residues 194 to 212 (GSGGGQDPGGGQGSGGGQP) show a composition bias toward gly residues. Positions 278-296 (QEANGQPSKPDTSDHQVSL) are enriched in polar residues.

It belongs to the RELT family. Interacts with RELT, RELL1 and OXSR1. Interacts with PLSCR1. Interacts with TRAF2. Phosphorylated in vitro by OXSR1. As to expression, primarily expressed in spleen, thymus, testis, peripheral blood leukocytes, brain and placenta. Not detected in prostate, ovary, small intestine, colon, heart, lung, liver, skeletal muscle, kidney and pancreas.

The protein resides in the cell membrane. Functionally, induces activation of MAPK14/p38 cascade, when overexpressed. Induces apoptosis, when overexpressed. The protein is RELT-like protein 2 (RELL2) of Homo sapiens (Human).